The primary structure comprises 404 residues: Cytochrome b561 and DOMON domain-containing protein At2g04850 (404 aa).

Residues 1-22 (MATLILSFLLLLLATKLPESLA) form the signal peptide. Residues 43–173 (QQASIAWTYH…TKIHHVWNRG (131 aa)) form the DOMON domain. Positions 180 to 380 (SPTIHPTTST…MEVNSWVVFC (201 aa)) constitute a Cytochrome b561 domain. Residues 217–237 (VTHGVVNAISWGFLLPAGAVT) form a helical membrane-spanning segment. Heme b-binding residues include histidine 219 and histidine 255. A helical membrane pass occupies residues 256-276 (AAIQLTGFLLGTIGFSIGIVL). Histidine 288 is a binding site for heme b. Residues 290 to 310 (SLGIATFTAAALQTLALLFRP) form a helical membrane-spanning segment. Histidine 324 contributes to the heme b binding site. 2 helical membrane passes run 326-346 (FVGYACVVMGVVNVFQGFEVL) and 359-379 (LCLSTLVGVCVAMEVNSWVVF).

It depends on heme b as a cofactor.

The protein resides in the membrane. Functionally, may act as a catecholamine-responsive trans-membrane electron transporter. The chain is Cytochrome b561 and DOMON domain-containing protein At2g04850 from Arabidopsis thaliana (Mouse-ear cress).